The chain runs to 260 residues: Triosephosphate isomerase (260 aa).

A substrate-binding site is contributed by 11-13; sequence NWK. Catalysis depends on H103, which acts as the Electrophile. Residue E175 is the Proton acceptor of the active site. Substrate contacts are provided by residues G181, S220, and 241–242; that span reads GG.

Belongs to the triosephosphate isomerase family. Homodimer.

Its subcellular location is the cytoplasm. The enzyme catalyses D-glyceraldehyde 3-phosphate = dihydroxyacetone phosphate. It functions in the pathway carbohydrate biosynthesis; gluconeogenesis. The protein operates within carbohydrate degradation; glycolysis; D-glyceraldehyde 3-phosphate from glycerone phosphate: step 1/1. Its function is as follows. Involved in the gluconeogenesis. Catalyzes stereospecifically the conversion of dihydroxyacetone phosphate (DHAP) to D-glyceraldehyde-3-phosphate (G3P). This chain is Triosephosphate isomerase, found in Shewanella denitrificans (strain OS217 / ATCC BAA-1090 / DSM 15013).